A 427-amino-acid chain; its full sequence is MTSRNETLFQRAQKSIPGGVNSPVRAFRSVGGTPRFISRAEGARVWDADGKAYVDYVGSWGPAIAGHAHPAIVEAVREAALAGLSFGAPSEAEVDIAELICELMPSIEMVRLVSSGTEATMSAIRLARGFTGRDAIVKFEGCYHGHADSLLVKAGSGLLTFGNPSSGGVPADFAKHTIVLDYNDLQQVEDAFRARGGEIAAVIVEAIAGNMNLVKPLPGFLEGLRRLCTEYGVVLIFDEVMTGFRVGPQGVQGLYGIMPDLTTLGKVIGGGMPVGAFGGRRDIMEKIAPLGSVYQAGTLSGSPVAVAAGLASLKLLREPGFYENLGARTTQLVTGLAAAANDAGVTFSADSVGGMFGVYFSAAVPKSFADVMASDRDAFNRFFHAMLDAGHYFAPSAFEAGFVSAAHTAADIDETIAAAREVFARLG.

Position 266 is an N6-(pyridoxal phosphate)lysine (K266).

This sequence belongs to the class-III pyridoxal-phosphate-dependent aminotransferase family. HemL subfamily. As to quaternary structure, homodimer. It depends on pyridoxal 5'-phosphate as a cofactor.

It is found in the cytoplasm. It catalyses the reaction (S)-4-amino-5-oxopentanoate = 5-aminolevulinate. It functions in the pathway porphyrin-containing compound metabolism; protoporphyrin-IX biosynthesis; 5-aminolevulinate from L-glutamyl-tRNA(Glu): step 2/2. The polypeptide is Glutamate-1-semialdehyde 2,1-aminomutase (Aromatoleum aromaticum (strain DSM 19018 / LMG 30748 / EbN1) (Azoarcus sp. (strain EbN1))).